Here is a 262-residue protein sequence, read N- to C-terminus: Ribosomal RNA small subunit methyltransferase A (262 aa).

Positions 18, 43, 65, 91, and 110 each coordinate S-adenosyl-L-methionine.

This sequence belongs to the class I-like SAM-binding methyltransferase superfamily. rRNA adenine N(6)-methyltransferase family. RsmA subfamily.

The protein localises to the cytoplasm. It catalyses the reaction adenosine(1518)/adenosine(1519) in 16S rRNA + 4 S-adenosyl-L-methionine = N(6)-dimethyladenosine(1518)/N(6)-dimethyladenosine(1519) in 16S rRNA + 4 S-adenosyl-L-homocysteine + 4 H(+). Specifically dimethylates two adjacent adenosines (A1518 and A1519) in the loop of a conserved hairpin near the 3'-end of 16S rRNA in the 30S particle. May play a critical role in biogenesis of 30S subunits. The protein is Ribosomal RNA small subunit methyltransferase A of Ehrlichia canis (strain Jake).